The sequence spans 339 residues: Phenylalanine--tRNA ligase alpha subunit (339 aa).

Mg(2+) is bound at residue Glu254.

Belongs to the class-II aminoacyl-tRNA synthetase family. Phe-tRNA synthetase alpha subunit type 1 subfamily. Tetramer of two alpha and two beta subunits. Mg(2+) serves as cofactor.

It is found in the cytoplasm. The catalysed reaction is tRNA(Phe) + L-phenylalanine + ATP = L-phenylalanyl-tRNA(Phe) + AMP + diphosphate + H(+). The protein is Phenylalanine--tRNA ligase alpha subunit of Caldanaerobacter subterraneus subsp. tengcongensis (strain DSM 15242 / JCM 11007 / NBRC 100824 / MB4) (Thermoanaerobacter tengcongensis).